The sequence spans 322 residues: ATP-dependent 6-phosphofructokinase (322 aa).

Position 12 (glycine 12) interacts with ATP. Residue 22–26 (RATAK) participates in ADP binding. Residues 73–74 (RS) and 103–106 (GDGS) contribute to the ATP site. Position 104 (aspartate 104) interacts with Mg(2+). 127-129 (TID) lines the substrate pocket. The active-site Proton acceptor is aspartate 129. Arginine 156 contacts ADP. Substrate contacts are provided by residues arginine 164 and 171–173 (MGR). ADP is bound by residues 187–189 (GGD) and 215–217 (KLH). Substrate contacts are provided by residues glutamate 224, arginine 245, and 251 to 254 (HIQR).

This sequence belongs to the phosphofructokinase type A (PFKA) family. ATP-dependent PFK group I subfamily. Prokaryotic clade 'B1' sub-subfamily. Homotetramer. Mg(2+) serves as cofactor.

It is found in the cytoplasm. The enzyme catalyses beta-D-fructose 6-phosphate + ATP = beta-D-fructose 1,6-bisphosphate + ADP + H(+). The protein operates within carbohydrate degradation; glycolysis; D-glyceraldehyde 3-phosphate and glycerone phosphate from D-glucose: step 3/4. With respect to regulation, allosterically activated by ADP and other diphosphonucleosides, and allosterically inhibited by phosphoenolpyruvate. Its function is as follows. Catalyzes the phosphorylation of D-fructose 6-phosphate to fructose 1,6-bisphosphate by ATP, the first committing step of glycolysis. This is ATP-dependent 6-phosphofructokinase from Fusobacterium nucleatum subsp. nucleatum (strain ATCC 25586 / DSM 15643 / BCRC 10681 / CIP 101130 / JCM 8532 / KCTC 2640 / LMG 13131 / VPI 4355).